Here is a 69-residue protein sequence, read N- to C-terminus: Sec-independent protein translocase protein TatA (69 aa).

Residues 1 to 21 (MFGLGGQELILILLIILLLFG) traverse the membrane as a helical segment.

Belongs to the TatA/E family. Forms a complex with TatC.

It localises to the cell inner membrane. In terms of biological role, part of the twin-arginine translocation (Tat) system that transports large folded proteins containing a characteristic twin-arginine motif in their signal peptide across membranes. TatA could form the protein-conducting channel of the Tat system. This is Sec-independent protein translocase protein TatA from Chlorobium phaeovibrioides (strain DSM 265 / 1930) (Prosthecochloris vibrioformis (strain DSM 265)).